An 853-amino-acid chain; its full sequence is Eukaryotic translation initiation factor 3 subunit C (853 aa).

Positions 1 to 78 (MSRFFAASDS…EDEDQNKVLK (78 aa)) are disordered. A compositionally biased stretch (acidic residues) spans 11-46 (SSEESSEEELYSDNEASAQEDSDKDSDDDDSDDDDS). One can recognise a PCI domain in the interval 599–773 (FHMHINLELL…SAIIFRKGVE (175 aa)). Residues 798–853 (TLEQRTQGTANAFERQGGRGGRGGGRGRGGGRGGGVPRGGRNQQFTGGALGRAIQA) are disordered. Gly residues predominate over residues 815–835 (GRGGRGGGRGRGGGRGGGVPR).

This sequence belongs to the eIF-3 subunit C family. Component of the eukaryotic translation initiation factor 3 (eIF-3) complex.

The protein localises to the cytoplasm. Functionally, component of the eukaryotic translation initiation factor 3 (eIF-3) complex, which is involved in protein synthesis of a specialized repertoire of mRNAs and, together with other initiation factors, stimulates binding of mRNA and methionyl-tRNAi to the 40S ribosome. The eIF-3 complex specifically targets and initiates translation of a subset of mRNAs involved in cell proliferation. The protein is Eukaryotic translation initiation factor 3 subunit C of Phaeosphaeria nodorum (strain SN15 / ATCC MYA-4574 / FGSC 10173) (Glume blotch fungus).